Reading from the N-terminus, the 251-residue chain is LexA repressor (251 aa).

The H-T-H motif DNA-binding region spans 26–46 (FDEMKDALGLKSKSGIHRLIK). Catalysis depends on for autocatalytic cleavage activity residues serine 172 and lysine 210.

This sequence belongs to the peptidase S24 family. Homodimer.

It catalyses the reaction Hydrolysis of Ala-|-Gly bond in repressor LexA.. In terms of biological role, represses a number of genes involved in the response to DNA damage (SOS response), including recA and lexA. In the presence of single-stranded DNA, RecA interacts with LexA causing an autocatalytic cleavage which disrupts the DNA-binding part of LexA, leading to derepression of the SOS regulon and eventually DNA repair. This is LexA repressor from Rhodospirillum rubrum (strain ATCC 11170 / ATH 1.1.1 / DSM 467 / LMG 4362 / NCIMB 8255 / S1).